A 167-amino-acid chain; its full sequence is Protein-export protein SecB (167 aa).

A disordered region spans residues 1 to 20 (MASNDDAPVGAANGNGNTGA).

It belongs to the SecB family. As to quaternary structure, homotetramer, a dimer of dimers. One homotetramer interacts with 1 SecA dimer.

The protein localises to the cytoplasm. In terms of biological role, one of the proteins required for the normal export of preproteins out of the cell cytoplasm. It is a molecular chaperone that binds to a subset of precursor proteins, maintaining them in a translocation-competent state. It also specifically binds to its receptor SecA. This is Protein-export protein SecB from Mesorhizobium japonicum (strain LMG 29417 / CECT 9101 / MAFF 303099) (Mesorhizobium loti (strain MAFF 303099)).